The following is a 751-amino-acid chain: Catalase-peroxidase (751 aa).

The interval 1-21 (MSNESKCPFHQTAGGGTTNRD) is disordered. Positions 90 to 244 (WHSAGTYRIG…LAAVQMGLIY (155 aa)) form a cross-link, tryptophyl-tyrosyl-methioninium (Trp-Tyr) (with M-270). His-91 serves as the catalytic Proton acceptor. The interval 195 to 227 (YGKDQVKAQPPGQGDLVAEPAKHGEEQNRDLSA) is disordered. Residues 214 to 227 (PAKHGEEQNRDLSA) are compositionally biased toward basic and acidic residues. A cross-link (tryptophyl-tyrosyl-methioninium (Tyr-Met) (with W-90)) is located at residues 244-270 (YVNPEGPEGNPDPVASGKDIRETFGRM). His-285 contacts heme b. The tract at residues 365–387 (AHQWRPKEGKGAGTVPDAHDPGK) is disordered.

The protein belongs to the peroxidase family. Peroxidase/catalase subfamily. As to quaternary structure, homodimer or homotetramer. It depends on heme b as a cofactor. In terms of processing, formation of the three residue Trp-Tyr-Met cross-link is important for the catalase, but not the peroxidase activity of the enzyme.

It catalyses the reaction H2O2 + AH2 = A + 2 H2O. The catalysed reaction is 2 H2O2 = O2 + 2 H2O. In terms of biological role, bifunctional enzyme with both catalase and broad-spectrum peroxidase activity. This chain is Catalase-peroxidase, found in Pseudomonas putida (strain ATCC 700007 / DSM 6899 / JCM 31910 / BCRC 17059 / LMG 24140 / F1).